The primary structure comprises 160 residues: Sec-independent protein translocase protein TatB (160 aa).

The helical transmembrane segment at 1-21 (MFGMGFFEILVVLVVAIIFLG) threads the bilayer. The tract at residues 118–160 (HLNEEVSNEEALNKEVSSDESPKEVQLATDNNTKEHDKEKEHV) is disordered. Composition is skewed to basic and acidic residues over residues 128-140 (ALNK…ESPK) and 149-160 (NTKEHDKEKEHV).

The protein belongs to the TatB family. In terms of assembly, the Tat system comprises two distinct complexes: a TatABC complex, containing multiple copies of TatA, TatB and TatC subunits, and a separate TatA complex, containing only TatA subunits. Substrates initially bind to the TatABC complex, which probably triggers association of the separate TatA complex to form the active translocon.

The protein resides in the cell inner membrane. Functionally, part of the twin-arginine translocation (Tat) system that transports large folded proteins containing a characteristic twin-arginine motif in their signal peptide across membranes. Together with TatC, TatB is part of a receptor directly interacting with Tat signal peptides. TatB may form an oligomeric binding site that transiently accommodates folded Tat precursor proteins before their translocation. This Helicobacter pylori (strain HPAG1) protein is Sec-independent protein translocase protein TatB.